A 234-amino-acid polypeptide reads, in one-letter code: tRNA (guanine-N(1)-)-methyltransferase (234 aa).

Residues glycine 112 and 132 to 137 (IGDFIL) contribute to the S-adenosyl-L-methionine site.

The protein belongs to the RNA methyltransferase TrmD family. In terms of assembly, homodimer.

The protein resides in the cytoplasm. The enzyme catalyses guanosine(37) in tRNA + S-adenosyl-L-methionine = N(1)-methylguanosine(37) in tRNA + S-adenosyl-L-homocysteine + H(+). Specifically methylates guanosine-37 in various tRNAs. The sequence is that of tRNA (guanine-N(1)-)-methyltransferase from Campylobacter jejuni subsp. jejuni serotype O:6 (strain 81116 / NCTC 11828).